The chain runs to 203 residues: Small ribosomal subunit protein uS3 (203 aa).

Residues 39 to 113 (IREIIRRNFL…NHVLNAKNIA (75 aa)) form the KH type-2 domain.

The protein belongs to the universal ribosomal protein uS3 family. As to quaternary structure, part of the 30S ribosomal subunit. Forms a tight complex with proteins S10 and S14.

Its function is as follows. Binds the lower part of the 30S subunit head. Binds mRNA in the 70S ribosome, positioning it for translation. This is Small ribosomal subunit protein uS3 from Carsonella ruddii.